The sequence spans 422 residues: Enolase (422 aa).

A (2R)-2-phosphoglycerate-binding site is contributed by Gln-162. The active-site Proton donor is the Glu-204. Asp-241, Glu-284, and Asp-311 together coordinate Mg(2+). (2R)-2-phosphoglycerate is bound by residues Lys-336, Arg-365, Ser-366, and Lys-387. The active-site Proton acceptor is the Lys-336.

The protein belongs to the enolase family. Mg(2+) is required as a cofactor.

It localises to the cytoplasm. It is found in the secreted. Its subcellular location is the cell surface. The enzyme catalyses (2R)-2-phosphoglycerate = phosphoenolpyruvate + H2O. Its pathway is carbohydrate degradation; glycolysis; pyruvate from D-glyceraldehyde 3-phosphate: step 4/5. Functionally, catalyzes the reversible conversion of 2-phosphoglycerate (2-PG) into phosphoenolpyruvate (PEP). It is essential for the degradation of carbohydrates via glycolysis. This chain is Enolase, found in Thermus thermophilus (strain ATCC 27634 / DSM 579 / HB8).